The chain runs to 141 residues: HTH-type transcriptional repressor NsrR (141 aa).

One can recognise an HTH rrf2-type domain in the interval 2–129 (QLTSFTDYGL…DNYTLADLVE (128 aa)). The H-T-H motif DNA-binding region spans 28-51 (ISEVTDVYGVSRNHMVKIINQLSR). [2Fe-2S] cluster is bound by residues Cys91, Cys96, and Cys102.

[2Fe-2S] cluster is required as a cofactor.

Its function is as follows. Nitric oxide-sensitive repressor of genes involved in protecting the cell against nitrosative stress. May require iron for activity. This chain is HTH-type transcriptional repressor NsrR, found in Escherichia fergusonii (strain ATCC 35469 / DSM 13698 / CCUG 18766 / IAM 14443 / JCM 21226 / LMG 7866 / NBRC 102419 / NCTC 12128 / CDC 0568-73).